A 231-amino-acid chain; its full sequence is Phosphoglycolate phosphatase (231 aa).

The Nucleophile role is filled by D9. Residues D9 and D11 each coordinate Mg(2+). D11 acts as the Proton donor in catalysis. K154 is a binding site for substrate. Mg(2+)-binding residues include D177 and D181.

This sequence belongs to the archaeal SPP-like hydrolase family. As to quaternary structure, homodimer. Mg(2+) serves as cofactor.

The catalysed reaction is 2-phosphoglycolate + H2O = glycolate + phosphate. Functionally, catalyzes the dephosphorylation of 2-phosphoglycolate. Has phosphatase activity towards p-nitrophenylphosphate (in vitro). This is Phosphoglycolate phosphatase from Pyrococcus horikoshii (strain ATCC 700860 / DSM 12428 / JCM 9974 / NBRC 100139 / OT-3).